A 203-amino-acid chain; its full sequence is Large ribosomal subunit protein uL18 (203 aa).

It belongs to the universal ribosomal protein uL18 family. As to quaternary structure, part of the 50S ribosomal subunit. Contacts the 5S and 23S rRNAs.

Its function is as follows. This is one of the proteins that bind and probably mediate the attachment of the 5S RNA into the large ribosomal subunit, where it forms part of the central protuberance. This Pyrococcus horikoshii (strain ATCC 700860 / DSM 12428 / JCM 9974 / NBRC 100139 / OT-3) protein is Large ribosomal subunit protein uL18.